The sequence spans 369 residues: 3-dehydroquinate synthase (369 aa).

NAD(+) is bound by residues 75-80 (DGEEHK), 109-113 (GVIGD), 133-134 (TT), K146, K155, and 173-176 (TLKT). Residues E188, H251, and H268 each contribute to the Zn(2+) site.

The protein belongs to the sugar phosphate cyclases superfamily. Dehydroquinate synthase family. Requires Co(2+) as cofactor. It depends on Zn(2+) as a cofactor. The cofactor is NAD(+).

Its subcellular location is the cytoplasm. It catalyses the reaction 7-phospho-2-dehydro-3-deoxy-D-arabino-heptonate = 3-dehydroquinate + phosphate. It functions in the pathway metabolic intermediate biosynthesis; chorismate biosynthesis; chorismate from D-erythrose 4-phosphate and phosphoenolpyruvate: step 2/7. Functionally, catalyzes the conversion of 3-deoxy-D-arabino-heptulosonate 7-phosphate (DAHP) to dehydroquinate (DHQ). The protein is 3-dehydroquinate synthase of Legionella pneumophila (strain Corby).